A 470-amino-acid polypeptide reads, in one-letter code: Uronate isomerase (470 aa).

It belongs to the metallo-dependent hydrolases superfamily. Uronate isomerase family.

The catalysed reaction is D-glucuronate = D-fructuronate. The enzyme catalyses aldehydo-D-galacturonate = keto-D-tagaturonate. It functions in the pathway carbohydrate metabolism; pentose and glucuronate interconversion. The polypeptide is Uronate isomerase (Klebsiella pneumoniae (strain 342)).